Consider the following 159-residue polypeptide: Bacterioferritin (159 aa).

One can recognise a Ferritin-like diiron domain in the interval 1–145 (MQGDPEVLRL…TQLELMDKLG (145 aa)). Residues Glu18 and Glu51 each coordinate Fe cation. A heme b-binding site is contributed by Met52. Residues His54, Glu94, Glu127, and His130 each contribute to the Fe cation site.

It belongs to the bacterioferritin family. Homooligomer of 24 subunits, arranged as 12 dimers, that are packed together to form an approximately spherical molecule with a central cavity, in which large amounts of iron can be deposited. The cofactor is heme b.

The catalysed reaction is 4 Fe(2+) + O2 + 4 H(+) = 4 Fe(3+) + 2 H2O. It catalyses the reaction Fe(2+)(in) = Fe(2+)(out). Its function is as follows. Iron-storage protein, whose ferroxidase center binds Fe(2+), oxidizes it using dioxygen to Fe(3+), and participates in the subsequent Fe(3+) oxide mineral core formation within the central cavity of the BFR protein shell. This is Bacterioferritin (bfr) from Mycolicibacterium paratuberculosis (strain ATCC BAA-968 / K-10) (Mycobacterium paratuberculosis).